We begin with the raw amino-acid sequence, 109 residues long: Non-structural protein of 12.7 kDa (109 aa).

The protein belongs to the coronaviruses ns12.7 protein family.

The sequence is that of Non-structural protein of 12.7 kDa from Sus scrofa (Pig).